A 265-amino-acid polypeptide reads, in one-letter code: Homeobox protein Nkx-6.3 (265 aa).

A DNA-binding region (homeobox) is located at residues 139-198; sequence KKHTRPTFTGHQIFALEKTFEQTKYLAGPERARLAYSLGMTESQVKVWFQNRRTKWRKKS. The segment at 196-240 is disordered; sequence KKSALEPSSSTPRAPGGAGAGAGGDRAPSENEDDEYNKPLDPDSD.

The protein resides in the nucleus. In terms of biological role, putative transcription factor, which may be involved in patterning of central nervous system and pancreas. The protein is Homeobox protein Nkx-6.3 (NKX6-3) of Homo sapiens (Human).